A 446-amino-acid polypeptide reads, in one-letter code: Iroquois homeobox protein 5a (446 aa).

The homeobox DNA-binding region spans 117–173 (NATRDATATLKAWLNEHRKNPYPTKGEKIMLAIITKMTLTQVSTWFANARRRLKKEN). The segment at 175 to 312 (MTWTPRNRSE…IHSPPSAPKP (138 aa)) is disordered. Over residues 184–201 (EDEEEDENIDLEKNDDDE) the composition is skewed to acidic residues. Basic and acidic residues-rich tracts occupy residues 202 to 220 (PNKPTDKGDSTDTEADHKL) and 227 to 258 (PCDRFKDETHSKDLDPPLTDSELKEAEERTDL). Composition is skewed to polar residues over residues 264 to 274 (KPTTSSPSVLQ) and 293 to 303 (STGNSNVTSVI).

This sequence belongs to the TALE/IRO homeobox family.

The protein resides in the nucleus. Transcription factor. Binds to consensus iroquois binding site (IBS) motifs 5'-ACANNTGT-3' or 5'-ACANNNTGT-3' in regulatory elements of target genes. Required, together with irx7, for hyoid joint formation; they act cell autonomously to repress expression of cartilage matrix genes, such as collagen col2a1a, within immature chondrocytes of the joint interzone. May compete with or modify Sox9a activity, thereby reducing Sox9a-mediated activation of col2a1a. Probably acts in the developing hyoid joint downstream of Bmp signaling. In concert with irx6a, plays a role in visual performance. The protein is Iroquois homeobox protein 5a (irx5a) of Danio rerio (Zebrafish).